Here is a 198-residue protein sequence, read N- to C-terminus: Elongation factor Ts (198 aa).

Residues 82-85 (SDFV) are involved in Mg(2+) ion dislocation from EF-Tu.

Belongs to the EF-Ts family.

The protein localises to the cytoplasm. Associates with the EF-Tu.GDP complex and induces the exchange of GDP to GTP. It remains bound to the aminoacyl-tRNA.EF-Tu.GTP complex up to the GTP hydrolysis stage on the ribosome. The chain is Elongation factor Ts from Desulfosudis oleivorans (strain DSM 6200 / JCM 39069 / Hxd3) (Desulfococcus oleovorans).